We begin with the raw amino-acid sequence, 263 residues long: UPF0739 protein C1orf74 homolog (263 aa).

The protein belongs to the UPF0739 family.

This chain is UPF0739 protein C1orf74 homolog, found in Bos taurus (Bovine).